The sequence spans 61 residues: Putative antitoxin RelB2 (61 aa).

Functionally, antitoxin component of a type II toxin-antitoxin (TA) system. Its cognate toxin is RelE2 (Potential). The protein is Putative antitoxin RelB2 (relB2) of Methanocaldococcus jannaschii (strain ATCC 43067 / DSM 2661 / JAL-1 / JCM 10045 / NBRC 100440) (Methanococcus jannaschii).